The chain runs to 390 residues: Ureide permease 1 (390 aa).

Residues 1-9 lie on the Extracellular side of the membrane; it reads MYMIESKGG. A helical membrane pass occupies residues 10–30; it reads AIACMLLALLFLGTWPAIMTL. Over 31-44 the chain is Cytoplasmic; it reads TERRGRLPQHTYLD. Residues 45–65 form a helical membrane-spanning segment; that stretch reads YTLTNLLAAVIIALTLGEIGP. Residues 66–78 lie on the Extracellular side of the membrane; that stretch reads SRPNFFTQLSQDN. The helical transmembrane segment at 79–99 threads the bilayer; sequence WQSVMFAMAGGIVLSLGNLAT. Over 100 to 101 the chain is Cytoplasmic; that stretch reads QY. A helical transmembrane segment spans residues 102–122; it reads AWAYVGLSVTEVITASITVVI. At 123-136 the chain is on the extracellular side; that stretch reads GTTLNYFLDDRINR. A helical transmembrane segment spans residues 137-157; that stretch reads AEVLFPGVACFLIAVCFGSAV. Residues 158 to 221 lie on the Cytoplasmic side of the membrane; the sequence is HKSNAADNKT…RAIKVFGKST (64 aa). Residue 213–220 coordinates ATP; sequence AIKVFGKS. A helical membrane pass occupies residues 222–242; it reads IIGLVITFFAGICFSLFSPAF. The Extracellular segment spans residues 243–261; sequence NLATNDQWHTLKHGVPKLN. A helical membrane pass occupies residues 262 to 282; the sequence is VYTAFFYFSISAFVVALILNI. The Cytoplasmic portion of the chain corresponds to 283–307; the sequence is RFLYWPILGLPRSSFKAYLNDWNGR. The chain crosses the membrane as a helical span at residues 308-328; it reads GWSFLAGFLCGFGNGLQFMGG. At 329–333 the chain is on the extracellular side; that stretch reads QAAGY. Residues 334–354 form a helical membrane-spanning segment; the sequence is AAADAVQALPLVSTFWGILLF. Residues 355–363 lie on the Cytoplasmic side of the membrane; it reads GEYRRSSRK. Residues 364-384 traverse the membrane as a helical segment; sequence TYTLLISMLLMFIVAVAVLMA. Over 385 to 390 the chain is Extracellular; the sequence is SSGHRK.

Belongs to the plant ureide permease (TC 2.A.7.19) family. In terms of tissue distribution, expressed in leaves, flowers, roots and stems.

It localises to the membrane. In terms of biological role, proton-coupled transporter that transports a wide spectrum of oxo derivatives of heterocyclic nitrogen compounds, including allantoin, uric acid and xanthine, but not adenine. Mediates high affinity transport of uracil and 5-fluorouracil (a toxic uracil analog). Mediates transport of free pyrimidines and may function during early seedling development in salvage pathways, by the utilization of pyrimidines from seed storage tissue. The protein is Ureide permease 1 of Arabidopsis thaliana (Mouse-ear cress).